Here is a 471-residue protein sequence, read N- to C-terminus: Iroquois-class homeodomain protein IRX-2 (471 aa).

Positions 112–175 (LNDPAYRKNA…ANARRRLKKE (64 aa)) form a DNA-binding region, homeobox; TALE-type. Disordered stretches follow at residues 176-373 (NKMT…SPYP) and 424-471 (APKA…QPYL). Ser-186 is modified (phosphoserine). Residues 195-209 (DATRSKDESPDKAQE) show a composition bias toward basic and acidic residues. The span at 261-273 (DDLEDDEDDDEEG) shows a compositional bias: acidic residues. A compositionally biased stretch (low complexity) spans 355–367 (PAAAAPASTGAPP). Gly residues predominate over residues 462-471 (VVGGGVQPYL).

Belongs to the TALE/IRO homeobox family.

It is found in the nucleus. This is Iroquois-class homeodomain protein IRX-2 (IRX2) from Homo sapiens (Human).